We begin with the raw amino-acid sequence, 593 residues long: MEKEKKVKYFLRKSAFGLASVSAAFLVGSTVFAVDSPIEDTPIIRNGGELTNLLGNSETTLALRNEESATADLTAAAVADTVAAAAAENAGAAAWEAAAAADALAKAKADALKEFNKYGVSDYYKNLINNAKTVEGVKDLQAQVVESAKKARISEATDGLSDFLKSQTPAEDTVKSIELAEAKVLANRELDKYGVSDYHKNLINNAKTVEGVKDLQAQVVESAKKARISEATDGLSDFLKSQTPAEDTVKSIELAEAKVLANRELDKYGVSDYYKNLINNAKTVEGVKALIDEILAALPKTDTYKLILNGKTLKGETTTEAVDAATAEKVFKQYANDNGVDGEWTYDDATKTFTVTEKPEVIDASELTPAVTTYKLVINGKTLKGETTTEAVDAATAEKVFKQYANDNGVDGEWTYDDATKTFTVTEKPEVIDASELTPAVTTYKLVINGKTLKGETTTKAVDAETAEKAFKQYANDNGVDGVWTYDDATKTFTVTEMVTEVPGDAPTEPEKPEASIPLVPLTPATPIAKDDAKKDDTKKEDAKKPEAKKEDAKKAETLPTTGEGSNPFFTAAALAVMAGAGALAVASKRKED.

The N-terminal stretch at 1 to 33 (MEKEKKVKYFLRKSAFGLASVSAAFLVGSTVFA) is a signal peptide. A run of 5 repeats spans residues 104–140 (LAKAKADALKEFNKYGVSDYYKNLINNAKTVEGVKDL), 179–215 (LAEAKVLANRELDKYGVSDYHKNLINNAKTVEGVKDL), 254–290 (LAEAKVLANRELDKYGVSDYYKNLINNAKTVEGVKAL), 303–357 (TYKL…TVTE), and 373–427 (TYKL…TVTE). The interval 104–290 (LAKAKADALK…AKTVEGVKAL (187 aa)) is 3 X 37 AA repeats. The segment at 303–427 (TYKLILNGKT…DATKTFTVTE (125 aa)) is 2 X 55 AA repeats. The segment at 503–567 (PGDAPTEPEK…TLPTTGEGSN (65 aa)) is disordered. Positions 529-557 (AKDDAKKDDTKKEDAKKPEAKKEDAKKAE) are enriched in basic and acidic residues. The interval 531–555 (DDAKKDDTKKEDAKKPEAKKEDAKK) is 5 X 5 AA repeats of [DE]-D-A-K-K. An LPXTG sorting signal motif is present at residues 559–563 (LPTTG). Residue threonine 562 is modified to Pentaglycyl murein peptidoglycan amidated threonine. Positions 563–593 (GEGSNPFFTAAALAVMAGAGALAVASKRKED) are cleaved as a propeptide — removed by sortase.

It is found in the secreted. The protein resides in the cell wall. The protein is Immunoglobulin G-binding protein G (spg) of Streptococcus sp. group G.